Consider the following 402-residue polypeptide: MTDAPLGCNSEVGTLRAVILHRPGAELQRLTPRNNDTLLFDGLPWVARAQQEHDAFADLLRSRGVEVLLLGDLLTEALDKSGAARMQGISAAVDARRLGAPLAQELSAYLRTLEAAPLARILMAGMTFDELPFGENELSLVRRMHHGGDFVIDPLPNLLFTRDSSFWIGPRVAITSLSMHARVRETSLTDLIYAHHPRFLRVRRAYESRSAPIEGGDVLLLAPGVVAVGVGERTTPAGAEALARSLFDDDLAHTVLAVPIAQERAQMHLDTVCTMVDTDAVVMYPNIQDSLTAFPIRRKSGGVTIDRAAPFVDAAADAMGIGKLRVIDTGLDPVTAEREQWDDGNNTLALAPGVVVAYERNTETNARLADSGIEVLPIAASELGTGRGGPRCMSCPAGRDPL.

Residue Cys392 is the Amidino-cysteine intermediate of the active site.

This sequence belongs to the arginine deiminase family.

It is found in the cytoplasm. It catalyses the reaction L-arginine + H2O = L-citrulline + NH4(+). It participates in amino-acid degradation; L-arginine degradation via ADI pathway; carbamoyl phosphate from L-arginine: step 1/2. This chain is Arginine deiminase, found in Mycolicibacterium gilvum (strain PYR-GCK) (Mycobacterium gilvum (strain PYR-GCK)).